Reading from the N-terminus, the 464-residue chain is L-cysteine:1D-myo-inositol 2-amino-2-deoxy-alpha-D-glucopyranoside ligase (464 aa).

A Zn(2+)-binding site is contributed by cysteine 67. Residues 67 to 70 (CGIT), threonine 82, and 105 to 107 (NVT) contribute to the L-cysteinyl-5'-AMP site. The 'HIGH' region motif lies at 69 to 79 (ITPYDATHLGH). The 'ERGGDP' region motif lies at 207-212 (ERGGDP). Residue tryptophan 247 coordinates L-cysteinyl-5'-AMP. Cysteine 251 serves as a coordination point for Zn(2+). 269-271 (GTD) contributes to the L-cysteinyl-5'-AMP binding site. Histidine 276 contacts Zn(2+). Valine 303 is a binding site for L-cysteinyl-5'-AMP. The short motif at 309-313 (KMSKS) is the 'KMSKS' region element. The segment at 410–435 (AGGSAGAGPDPTHQGGPVRGSGGDVP) is disordered.

It belongs to the class-I aminoacyl-tRNA synthetase family. MshC subfamily. Monomer. The cofactor is Zn(2+).

The enzyme catalyses 1D-myo-inositol 2-amino-2-deoxy-alpha-D-glucopyranoside + L-cysteine + ATP = 1D-myo-inositol 2-(L-cysteinylamino)-2-deoxy-alpha-D-glucopyranoside + AMP + diphosphate + H(+). Functionally, catalyzes the ATP-dependent condensation of GlcN-Ins and L-cysteine to form L-Cys-GlcN-Ins. The polypeptide is L-cysteine:1D-myo-inositol 2-amino-2-deoxy-alpha-D-glucopyranoside ligase (Frankia casuarinae (strain DSM 45818 / CECT 9043 / HFP020203 / CcI3)).